We begin with the raw amino-acid sequence, 354 residues long: MPQKVRIALDAMGGDIGASVVIPGAVISLNRHPDTEFLLYGDRTLIEAQLAAHPAMKAVSRVVHTDVAVAMHDKPSQALRRGRKTSSMWLAIDAVKKGEADVAVSAGNTGALMAMARFNLRTLPGIDRPAIAGVWPTMRGDSVVLDLGATIGGDAHHLMALAIMGSAMARVLFGLERPTVGLLNIGVEEIKGGEEIREAAELLRAMDLPQLEFIGFVEGDGIGKGAADVIVSEGFSGNIALKAAEGTARQFAQYLRGAMSRTLLSRIGYLFARGAFKALRDKMDPRKSNGGVFLGLNGIVVKSHGGTDAEGFAYAVDVGYEMVRYDLLTKINQTLNRHGHTTLASASAVQEALS.

Belongs to the PlsX family. In terms of assembly, homodimer. Probably interacts with PlsY.

It localises to the cytoplasm. The catalysed reaction is a fatty acyl-[ACP] + phosphate = an acyl phosphate + holo-[ACP]. It participates in lipid metabolism; phospholipid metabolism. Functionally, catalyzes the reversible formation of acyl-phosphate (acyl-PO(4)) from acyl-[acyl-carrier-protein] (acyl-ACP). This enzyme utilizes acyl-ACP as fatty acyl donor, but not acyl-CoA. In Nitrobacter hamburgensis (strain DSM 10229 / NCIMB 13809 / X14), this protein is Phosphate acyltransferase.